A 317-amino-acid polypeptide reads, in one-letter code: Protoheme IX farnesyltransferase (317 aa).

8 consecutive transmembrane segments (helical) span residues 44–64 (IGLI…ANTF), 93–113 (HASV…WVLC), 116–136 (VLAG…YTKY), 143–163 (LNIV…WAVI), 178–198 (AIVL…ALAM), 221–241 (VTRQ…LLIP), 243–263 (ASWI…VMAV), and 288–308 (LAVY…TIGG).

This sequence belongs to the UbiA prenyltransferase family. Protoheme IX farnesyltransferase subfamily.

The protein localises to the cell membrane. The catalysed reaction is heme b + (2E,6E)-farnesyl diphosphate + H2O = Fe(II)-heme o + diphosphate. It functions in the pathway porphyrin-containing compound metabolism; heme O biosynthesis; heme O from protoheme: step 1/1. Its function is as follows. Converts heme B (protoheme IX) to heme O by substitution of the vinyl group on carbon 2 of heme B porphyrin ring with a hydroxyethyl farnesyl side group. This chain is Protoheme IX farnesyltransferase, found in Corynebacterium diphtheriae (strain ATCC 700971 / NCTC 13129 / Biotype gravis).